Here is a 262-residue protein sequence, read N- to C-terminus: Flap endonuclease Xni (262 aa).

Asp-105 provides a ligand contact to Mg(2+). In terms of domain architecture, 5'-3' exonuclease spans Glu-162–Lys-257. 5 residues coordinate K(+): Leu-172, Ala-173, Pro-181, Ile-183, and Ile-186. Positions Gly-185–Ser-190 are interaction with DNA.

This sequence belongs to the Xni family. Requires Mg(2+) as cofactor. The cofactor is K(+).

Functionally, has flap endonuclease activity. During DNA replication, flap endonucleases cleave the 5'-overhanging flap structure that is generated by displacement synthesis when DNA polymerase encounters the 5'-end of a downstream Okazaki fragment. The protein is Flap endonuclease Xni of Shewanella baltica (strain OS155 / ATCC BAA-1091).